Consider the following 664-residue polypeptide: Peroxisomal acyl-coenzyme A oxidase 1 (664 aa).

FAD contacts are provided by Tyr-135, Gln-137, Thr-138, Ser-144, Gly-177, Arg-310, Gln-330, Arg-333, Gly-401, and Thr-422. Glu-424 functions as the Proton acceptor in the catalytic mechanism. An FAD-binding site is contributed by Asp-426. Cys-467 and Cys-576 are oxidised to a cystine. Residues 662 to 664 carry the Microbody targeting signal motif; it reads ARL.

It belongs to the acyl-CoA oxidase family. In terms of assembly, homodimer. It depends on FAD as a cofactor. In terms of tissue distribution, expressed mainly in flowers and young seedlings. Lower expression in roots, leaves and bracts.

The protein resides in the peroxisome. The catalysed reaction is a 2,3-saturated acyl-CoA + O2 = a (2E)-enoyl-CoA + H2O2. Functionally, catalyzes the desaturation of both long- and medium-chain acyl-CoAs to 2-trans-enoyl-CoAs. Most active with C14-CoA. Activity on long-chain mono-unsaturated substrates is 40% higher than with the corresponding saturated substrates. Seems to be an important factor in the general metabolism of root tips. May be involved in the biosynthesis of jasmonic acid. In Arabidopsis thaliana (Mouse-ear cress), this protein is Peroxisomal acyl-coenzyme A oxidase 1.